We begin with the raw amino-acid sequence, 453 residues long: Tubulin delta chain (453 aa).

Position 143–149 (143–149) interacts with GTP; that stretch reads AGGTGSG.

This sequence belongs to the tubulin family. As to quaternary structure, found in a complex with TEDC1, TEDC2, TUBE1 and TUBD1.

The protein resides in the nucleus. The protein localises to the cytoplasm. It localises to the cytoskeleton. It is found in the microtubule organizing center. Its subcellular location is the centrosome. The protein resides in the centriole. The protein localises to the cell projection. It localises to the cilium. In terms of biological role, acts as a positive regulator of hedgehog signaling and regulates ciliary function. The sequence is that of Tubulin delta chain (TUBD1) from Canis lupus familiaris (Dog).